Here is a 400-residue protein sequence, read N- to C-terminus: Lysophospholipid transporter LplT (400 aa).

A run of 12 helical transmembrane segments spans residues 19–39, 53–73, 91–111, 139–159, 164–184, 195–213, 227–247, 257–277, 281–301, 304–324, 352–372, and 373–393; these read VIVA…ATLA, VLQM…GQIA, AGAA…LVGI, LMEA…GVLA, IAAL…NLFI, SWRL…VVLW, LFWG…PVAL, YLNA…AKLV, TVSR…IFSL, ALLP…FFVV, NSAM…GVPA, and VAIG…LWIW.

Belongs to the major facilitator superfamily. LplT (TC 2.A.1.42) family.

It is found in the cell inner membrane. Its function is as follows. Catalyzes the facilitated diffusion of 2-acyl-glycero-3-phosphoethanolamine (2-acyl-GPE) into the cell. This Salmonella agona (strain SL483) protein is Lysophospholipid transporter LplT.